A 598-amino-acid chain; its full sequence is Nuclear receptor subfamily 4 group A member 2 (598 aa).

The disordered stretch occupies residues 1–22; that stretch reads MPCVQAQYGSSPQGASPASQSY. Over residues 8–22 the composition is skewed to low complexity; it reads YGSSPQGASPASQSY. A DNA-binding region (nuclear receptor) is located at residues 260–335; that stretch reads EGLCAVCGDN…VGMVKEVVRT (76 aa). 2 consecutive NR C4-type zinc fingers follow at residues 263-283 and 299-318; these read CAVCGDNAACQHYGVRTCEGC and CLANKNCPVDKRRRNRCQYC. The Bipartite nuclear localization signal (NLS1) signature appears at 287 to 314; it reads FKRTVQKNAKYVCLANKNCPVDKRRRNR. Residues 337–361 form a disordered region; it reads SLKGRRGRLPSKPKSPQEPSPPSPP. Positions 338-350 match the Nuclear localization signal (NLS1) motif; sequence LKGRRGRLPSKPK. Residues 352-361 are compositionally biased toward pro residues; the sequence is PQEPSPPSPP. An NR LBD domain is found at 360 to 595; that stretch reads PPVSLISALV…AIIDKLFLDT (236 aa). Residues 443-452 carry the nuclear export sequence (NES1) motif; that stretch reads FLELFVLRLA. A nuclear export sequence (NES2) motif is present at residues 568 to 577; sequence QGLQRIFYLK.

Belongs to the nuclear hormone receptor family. NR4 subfamily. As to quaternary structure, interacts with SFPQ, NCOR2, SIN3A and HADC1. The interaction with NCOR2 increases in the absence of PITX3. Interacts with PER2.

It is found in the cytoplasm. The protein localises to the nucleus. Transcriptional regulator which is important for the differentiation and maintenance of meso-diencephalic dopaminergic (mdDA) neurons during development. It is crucial for expression of a set of genes such as SLC6A3, SLC18A2, TH and DRD2 which are essential for development of mdDA neurons. The polypeptide is Nuclear receptor subfamily 4 group A member 2 (NR4A2) (Bos taurus (Bovine)).